A 437-amino-acid chain; its full sequence is Adenylosuccinate synthetase (437 aa).

Residues Gly-12 to Lys-18 and Gly-40 to Thr-42 each bind GTP. Catalysis depends on Asp-13, which acts as the Proton acceptor. Mg(2+) contacts are provided by Asp-13 and Gly-40. IMP contacts are provided by residues Asp-13–Lys-16, Asn-38–His-41, Thr-128, Arg-142, Gln-223, Thr-238, and Arg-302. His-41 functions as the Proton donor in the catalytic mechanism. Thr-298–Arg-304 is a substrate binding site. Residues Arg-304, Lys-330 to Asp-332, and Ser-412 to Gly-414 contribute to the GTP site.

This sequence belongs to the adenylosuccinate synthetase family. In terms of assembly, homodimer. Mg(2+) serves as cofactor.

The protein resides in the cytoplasm. It carries out the reaction IMP + L-aspartate + GTP = N(6)-(1,2-dicarboxyethyl)-AMP + GDP + phosphate + 2 H(+). Its pathway is purine metabolism; AMP biosynthesis via de novo pathway; AMP from IMP: step 1/2. In terms of biological role, plays an important role in the de novo pathway of purine nucleotide biosynthesis. Catalyzes the first committed step in the biosynthesis of AMP from IMP. In Synechococcus sp. (strain RCC307), this protein is Adenylosuccinate synthetase.